Reading from the N-terminus, the 131-residue chain is MAAQLQYQGTGRRKNAVARVRLIPGEGKVTINKRELAEYFGKKTLEMIVQQPFGVTDTAGKYDVVALAHGGGTTGQAGALRLGIARALLKADPSLRPALKRAGFLTRDPRMKERRKYGLKKARKAPQFSKR.

The tract at residues 102-131 (AGFLTRDPRMKERRKYGLKKARKAPQFSKR) is disordered. Positions 112–131 (KERRKYGLKKARKAPQFSKR) are enriched in basic residues.

This sequence belongs to the universal ribosomal protein uS9 family.

The protein is Small ribosomal subunit protein uS9 of Desulfitobacterium hafniense (strain DSM 10664 / DCB-2).